A 61-amino-acid polypeptide reads, in one-letter code: Small ribosomal subunit protein uS14 (61 aa).

4 residues coordinate Zn(2+): Cys24, Cys27, Cys40, and Cys43.

Belongs to the universal ribosomal protein uS14 family. Zinc-binding uS14 subfamily. In terms of assembly, part of the 30S ribosomal subunit. Contacts proteins S3 and S10. Zn(2+) serves as cofactor.

In terms of biological role, binds 16S rRNA, required for the assembly of 30S particles and may also be responsible for determining the conformation of the 16S rRNA at the A site. The protein is Small ribosomal subunit protein uS14 of Anoxybacillus flavithermus (strain DSM 21510 / WK1).